A 168-amino-acid chain; its full sequence is Crossover junction endodeoxyribonuclease RuvC (168 aa).

Residues Asp-7, Glu-64, and Asp-136 contribute to the active site. Mg(2+) is bound by residues Asp-7, Glu-64, and Asp-136.

This sequence belongs to the RuvC family. Homodimer which binds Holliday junction (HJ) DNA. The HJ becomes 2-fold symmetrical on binding to RuvC with unstacked arms; it has a different conformation from HJ DNA in complex with RuvA. In the full resolvosome a probable DNA-RuvA(4)-RuvB(12)-RuvC(2) complex forms which resolves the HJ. Mg(2+) serves as cofactor.

The protein resides in the cytoplasm. It catalyses the reaction Endonucleolytic cleavage at a junction such as a reciprocal single-stranded crossover between two homologous DNA duplexes (Holliday junction).. In terms of biological role, the RuvA-RuvB-RuvC complex processes Holliday junction (HJ) DNA during genetic recombination and DNA repair. Endonuclease that resolves HJ intermediates. Cleaves cruciform DNA by making single-stranded nicks across the HJ at symmetrical positions within the homologous arms, yielding a 5'-phosphate and a 3'-hydroxyl group; requires a central core of homology in the junction. The consensus cleavage sequence is 5'-(A/T)TT(C/G)-3'. Cleavage occurs on the 3'-side of the TT dinucleotide at the point of strand exchange. HJ branch migration catalyzed by RuvA-RuvB allows RuvC to scan DNA until it finds its consensus sequence, where it cleaves and resolves the cruciform DNA. This Polynucleobacter necessarius subsp. necessarius (strain STIR1) protein is Crossover junction endodeoxyribonuclease RuvC.